A 312-amino-acid polypeptide reads, in one-letter code: tRNA uridine(34) hydroxylase (312 aa).

The Rhodanese domain occupies 130-225; the sequence is RGDEVVFFDG…YGEKFGNQGL (96 aa). The active-site Cysteine persulfide intermediate is the cysteine 185.

This sequence belongs to the TrhO family.

The catalysed reaction is uridine(34) in tRNA + AH2 + O2 = 5-hydroxyuridine(34) in tRNA + A + H2O. Functionally, catalyzes oxygen-dependent 5-hydroxyuridine (ho5U) modification at position 34 in tRNAs. The polypeptide is tRNA uridine(34) hydroxylase (Corynebacterium efficiens (strain DSM 44549 / YS-314 / AJ 12310 / JCM 11189 / NBRC 100395)).